A 279-amino-acid polypeptide reads, in one-letter code: Bifunctional protein FolD (279 aa).

Residues 158–160 (GRS), serine 183, and isoleucine 224 each bind NADP(+).

The protein belongs to the tetrahydrofolate dehydrogenase/cyclohydrolase family. Homodimer.

The catalysed reaction is (6R)-5,10-methylene-5,6,7,8-tetrahydrofolate + NADP(+) = (6R)-5,10-methenyltetrahydrofolate + NADPH. It carries out the reaction (6R)-5,10-methenyltetrahydrofolate + H2O = (6R)-10-formyltetrahydrofolate + H(+). It functions in the pathway one-carbon metabolism; tetrahydrofolate interconversion. Its function is as follows. Catalyzes the oxidation of 5,10-methylenetetrahydrofolate to 5,10-methenyltetrahydrofolate and then the hydrolysis of 5,10-methenyltetrahydrofolate to 10-formyltetrahydrofolate. In Caldicellulosiruptor saccharolyticus (strain ATCC 43494 / DSM 8903 / Tp8T 6331), this protein is Bifunctional protein FolD.